A 312-amino-acid polypeptide reads, in one-letter code: MPVKIPDDLPAAEILESENIFVMSETRAANQDIRPMKVLILNLMPNKIETETQLLRLLGNTPLQVDVDLLRIHDKASKHTSIDHMNNFYRDFEQVRQKNYDGLIITGAPLGQIEFEEVLYWDHIREIIDWSQQHVTSVLFLCWAAHAALYHLFGLNRSLLTTKRSGVFTHKRTSEHYPLLRGFDDEFFAPHSRFAEMDIDKLKAHPELQVLTESETAGAYMVLCKNNRNLFVMGHPEYQKSTLKDEYYRDLEQGLAPEVPQNYFTNNDPLQAPIARWHSHGSLLVSNWLNYYVYQLTPYNLDDMTGITPWGT.

Cys-142 functions as the Acyl-thioester intermediate in the catalytic mechanism. Substrate contacts are provided by Lys-163 and Ser-192. His-235 serves as the catalytic Proton acceptor. Glu-237 is a catalytic residue. Arg-249 contributes to the substrate binding site.

Belongs to the MetA family.

Its subcellular location is the cytoplasm. The enzyme catalyses L-homoserine + succinyl-CoA = O-succinyl-L-homoserine + CoA. It functions in the pathway amino-acid biosynthesis; L-methionine biosynthesis via de novo pathway; O-succinyl-L-homoserine from L-homoserine: step 1/1. In terms of biological role, transfers a succinyl group from succinyl-CoA to L-homoserine, forming succinyl-L-homoserine. The protein is Homoserine O-succinyltransferase of Shewanella halifaxensis (strain HAW-EB4).